The chain runs to 445 residues: Phosphoglucosamine mutase (445 aa).

The active-site Phosphoserine intermediate is S102. Mg(2+)-binding residues include S102, D240, D242, and D244. The residue at position 102 (S102) is a Phosphoserine.

It belongs to the phosphohexose mutase family. It depends on Mg(2+) as a cofactor. Activated by phosphorylation.

The catalysed reaction is alpha-D-glucosamine 1-phosphate = D-glucosamine 6-phosphate. Functionally, catalyzes the conversion of glucosamine-6-phosphate to glucosamine-1-phosphate. In Mycolicibacterium vanbaalenii (strain DSM 7251 / JCM 13017 / BCRC 16820 / KCTC 9966 / NRRL B-24157 / PYR-1) (Mycobacterium vanbaalenii), this protein is Phosphoglucosamine mutase.